Reading from the N-terminus, the 514-residue chain is Type-2 serine--tRNA ligase (514 aa).

Position 313 (A313) interacts with L-serine. Residue C315 coordinates Zn(2+). R344 contacts L-serine. ATP is bound by residues 344–346 (RWE) and 355–356 (RV). 361 to 363 (RGE) is an L-serine binding site. Positions 363 and 470 each coordinate Zn(2+). ATP is bound at residue R477.

It belongs to the class-II aminoacyl-tRNA synthetase family. Type-2 seryl-tRNA synthetase subfamily. As to quaternary structure, homodimer. Zn(2+) serves as cofactor.

It localises to the cytoplasm. The enzyme catalyses tRNA(Ser) + L-serine + ATP = L-seryl-tRNA(Ser) + AMP + diphosphate + H(+). It carries out the reaction tRNA(Sec) + L-serine + ATP = L-seryl-tRNA(Sec) + AMP + diphosphate + H(+). Its pathway is aminoacyl-tRNA biosynthesis; selenocysteinyl-tRNA(Sec) biosynthesis; L-seryl-tRNA(Sec) from L-serine and tRNA(Sec): step 1/1. In terms of biological role, catalyzes the attachment of serine to tRNA(Ser). Is also able to aminoacylate tRNA(Sec) with serine, to form the misacylated tRNA L-seryl-tRNA(Sec), which will be further converted into selenocysteinyl-tRNA(Sec). The polypeptide is Type-2 serine--tRNA ligase (serS) (Methanococcus maripaludis (strain DSM 14266 / JCM 13030 / NBRC 101832 / S2 / LL)).